Consider the following 172-residue polypeptide: Thioredoxin M5, chloroplastic (172 aa).

A chloroplast-targeting transit peptide spans methionine 1–glutamine 59. A disordered region spans residues glutamine 17 to proline 47. Positions cysteine 60–serine 171 constitute a Thioredoxin domain. Residues cysteine 95 and cysteine 98 each act as nucleophile in the active site. A disulfide bond links cysteine 95 and cysteine 98.

Belongs to the thioredoxin family. Plant M-type subfamily. Expressed in leaves and at lower levels in flowers.

The protein localises to the plastid. Its subcellular location is the chloroplast. In terms of biological role, thiol-disulfide oxidoreductase probably involved in the redox regulation of chloroplastic enzymes. Required for chloroplast biogenesis and differentiation. Functions as an electron donor for plastidial 2-Cys peroxiredoxins and participates in hydrogen peroxide scavenging system in chloroplasts. Possesses reducing activity towards insulin disulfide bonds. The polypeptide is Thioredoxin M5, chloroplastic (TRXM) (Oryza sativa subsp. japonica (Rice)).